A 60-amino-acid polypeptide reads, in one-letter code: UPF0434 protein mma_2578 (60 aa).

Belongs to the UPF0434 family.

The protein is UPF0434 protein mma_2578 of Janthinobacterium sp. (strain Marseille) (Minibacterium massiliensis).